A 316-amino-acid chain; its full sequence is MATKRKIGDGYSSSDDNQPKRERSEGGEDQQLVPYNSGAFNVKHDETGVMCYFTPSSIQLEPHELTKMLWQEQMAINVKRGNFSILNCSCFEGRFLKNEFCRLSNLNSLHEWEDKLYPEPDKNIVVLEPANGKTTYTIGPRVQGKPCGFWFSDFGTIKRAKSNFGQFFSIQYGDIHKHNNIFGNILQKHLQSDFPLKMEPNVCIHLPDKNKTSERDMLIRRFYIINRDNNGSIYATGKIRNVPLDMQRMSVEDFDRLFEMDKIDGPSEEIKMYMMGTIDGVKYGKEMQMTDMNNKKITEKPYSLAFKPGIFVIIEQ.

The disordered stretch occupies residues 1–34; sequence MATKRKIGDGYSSSDDNQPKRERSEGGEDQQLVP. Positions 17–26 are enriched in basic and acidic residues; the sequence is NQPKRERSEG.

This is an uncharacterized protein from Lepidoptera (butterflies and moths).